Here is a 201-residue protein sequence, read N- to C-terminus: Pyridoxal 5'-phosphate synthase subunit PdxT (201 aa).

49 to 51 provides a ligand contact to L-glutamine; that stretch reads GES. Catalysis depends on Cys81, which acts as the Nucleophile. L-glutamine-binding positions include Arg110 and 139–140; that span reads IR. Catalysis depends on charge relay system residues His175 and Glu177.

The protein belongs to the glutaminase PdxT/SNO family. In the presence of PdxS, forms a dodecamer of heterodimers. Only shows activity in the heterodimer.

The enzyme catalyses aldehydo-D-ribose 5-phosphate + D-glyceraldehyde 3-phosphate + L-glutamine = pyridoxal 5'-phosphate + L-glutamate + phosphate + 3 H2O + H(+). It catalyses the reaction L-glutamine + H2O = L-glutamate + NH4(+). It participates in cofactor biosynthesis; pyridoxal 5'-phosphate biosynthesis. Functionally, catalyzes the hydrolysis of glutamine to glutamate and ammonia as part of the biosynthesis of pyridoxal 5'-phosphate. The resulting ammonia molecule is channeled to the active site of PdxS. The protein is Pyridoxal 5'-phosphate synthase subunit PdxT of Streptomyces avermitilis (strain ATCC 31267 / DSM 46492 / JCM 5070 / NBRC 14893 / NCIMB 12804 / NRRL 8165 / MA-4680).